A 283-amino-acid chain; its full sequence is MCSTPTYCDLGKAAKDVFNKGYGFGMVKIDLKTKSCSGVEFSTSGHAYTDTGKASGNLETKYKVCNYGLIFTQKWNTDNTLGTEISWENKLAEGLKLTVDTIFVPNTGKKSGKLKASYRRDCFSVGSKVDIDFSGPTIYGWAVLAFEGWLAGYQMSFDTAKSKLCQNNFALGYKAEDFQLHTHVNDGTEFGGSIYQRVNEKIETSINLAWTAGSNNTRFGIAAKYRLDCRTSLSAKVNNASLIGLGYTQSLRPGVKLTLSALVDGKNFNAGGHKVGLGFELEA.

Cys2 bears the N-acetylcysteine mark. A Phosphothreonine modification is found at Thr4. N6-acetyllysine occurs at positions 12, 15, and 20. Transmembrane regions (beta stranded) follow at residues 26 to 35 (MVKIDLKTKS) and 39 to 47 (VEFSTSGHA). Residue Thr33 is modified to Phosphothreonine. A Glycyl lysine isopeptide (Lys-Gly) (interchain with G-Cter in ubiquitin) cross-link involves residue Lys53. 3 beta stranded membrane passes run 54–64 (ASGNLETKYKV), 69–76 (LIFTQKWN), and 80–89 (TLGTEISWEN). Lys90 carries the post-translational modification N6-acetyllysine. Residues 95-104 (LKLTVDTIFV) form a beta stranded membrane-spanning segment. Glycyl lysine isopeptide (Lys-Gly) (interchain with G-Cter in ubiquitin) cross-links involve residues Lys109 and Lys110. Transmembrane regions (beta stranded) follow at residues 111–120 (SGKLKASYRR), 123–130 (FSVGSKVD), 137–145 (TIYGWAVLA), 150–158 (LAGYQMSFD), 163–175 (KLCQ…GYKA), 178–185 (FQLHTHVN), 189–198 (EFGGSIYQRV), 202–211 (IETSINLAWT), 218–227 (RFGIAAKYRL), and 231–238 (TSLSAKVN). At Ser241 the chain carries Phosphoserine. NAD(+) is bound by residues 242 to 244 (LIG) and 260 to 264 (SALVD). A run of 2 beta stranded transmembrane segments spans residues 242 to 251 (LIGLGYTQSL) and 254 to 263 (GVKLTLSALV). Lys266 is subject to N6-acetyllysine; alternate. Residue Lys266 forms a Glycyl lysine isopeptide (Lys-Gly) (interchain with G-Cter in ubiquitin); alternate linkage. A beta stranded transmembrane segment spans residues 273-282 (HKVGLGFELE).

Belongs to the eukaryotic mitochondrial porin family. In terms of assembly, interacts with ARMC12 in a TBC1D21-dependent manner. Interacts with MISFA. Post-translationally, ubiquitinated by PRKN during mitophagy, leading to its degradation and enhancement of mitophagy. Deubiquitinated by USP30. In terms of tissue distribution, isoform 1 is widely expressed with strong expression in atrium and ascitic tumor, lower levels in brain and very low levels in liver and kidney. Isoform 2 is also widely expressed with highest levels in brain but no expression in kidney. Also expressed in flagella of epididymal sperm.

The protein localises to the mitochondrion outer membrane. It is found in the membrane. The enzyme catalyses chloride(in) = chloride(out). The catalysed reaction is K(+)(in) = K(+)(out). Functionally, non-selective voltage-gated ion channel that mediates the transport of anions and cations through the mitochondrion outer membrane and plasma membrane. Forms a high-conducting channel with a stable open state and a voltage-induced closure with a mild preference for anions over cations. Involved in male fertility and sperm mitochondrial sheath formation. This chain is Non-selective voltage-gated ion channel VDAC3, found in Rattus norvegicus (Rat).